The primary structure comprises 310 residues: Glycine--tRNA ligase alpha subunit (310 aa).

It belongs to the class-II aminoacyl-tRNA synthetase family. Tetramer of two alpha and two beta subunits.

The protein localises to the cytoplasm. The catalysed reaction is tRNA(Gly) + glycine + ATP = glycyl-tRNA(Gly) + AMP + diphosphate. The chain is Glycine--tRNA ligase alpha subunit from Agrobacterium fabrum (strain C58 / ATCC 33970) (Agrobacterium tumefaciens (strain C58)).